The primary structure comprises 453 residues: Ribulose bisphosphate carboxylase large chain (453 aa).

A propeptide spanning residues 1–2 (MS) is cleaved from the precursor. P3 carries the N-acetylproline modification. An N6,N6,N6-trimethyllysine modification is found at K14. Positions 123 and 173 each coordinate substrate. Catalysis depends on K175, which acts as the Proton acceptor. Substrate is bound at residue K177. Residues K201, D203, and E204 each contribute to the Mg(2+) site. Residue K201 is modified to N6-carboxylysine. H294 functions as the Proton acceptor in the catalytic mechanism. Residues R295, H327, and S379 each coordinate substrate.

Belongs to the RuBisCO large chain family. Type I subfamily. In terms of assembly, heterohexadecamer of 8 large chains and 8 small chains; disulfide-linked. The disulfide link is formed within the large subunit homodimers. It depends on Mg(2+) as a cofactor. In terms of processing, the disulfide bond which can form in the large chain dimeric partners within the hexadecamer appears to be associated with oxidative stress and protein turnover.

The protein localises to the plastid. Its subcellular location is the chloroplast. The enzyme catalyses 2 (2R)-3-phosphoglycerate + 2 H(+) = D-ribulose 1,5-bisphosphate + CO2 + H2O. It catalyses the reaction D-ribulose 1,5-bisphosphate + O2 = 2-phosphoglycolate + (2R)-3-phosphoglycerate + 2 H(+). Its function is as follows. RuBisCO catalyzes two reactions: the carboxylation of D-ribulose 1,5-bisphosphate, the primary event in carbon dioxide fixation, as well as the oxidative fragmentation of the pentose substrate in the photorespiration process. Both reactions occur simultaneously and in competition at the same active site. This is Ribulose bisphosphate carboxylase large chain from Rubia tinctorum (Madder).